The primary structure comprises 179 residues: MKLSFSLCIFFFNLLLLLQAVISADIVQGTCKKVAQRSPNVNYDFCVKSLGADPKSHTADLQGLGVISANLAIQHGSKIQTFIGRILKSKVDPALKKYLNDCVGLYADAKSSVQEAIADFKSKDYASANVKMSAALDDSVTCEDGFKEKKGIVSPVTKENKDYVQLTAISLAITKLLGA.

An N-terminal signal peptide occupies residues 1-23 (MKLSFSLCIFFFNLLLLLQAVIS). 2 cysteine pairs are disulfide-bonded: Cys-31/Cys-46 and Cys-102/Cys-142.

Belongs to the PMEI family. In terms of assembly, monomer. Not glycosylated. As to expression, expressed in pollen (at protein level). Expressed in stem, but not leaves (at protein level). Expressed in pollen.

It is found in the secreted. The protein resides in the cell wall. Its subcellular location is the endoplasmic reticulum. Functionally, invertase inhibitor. In Platanus acerifolia (London plane tree), this protein is Putative invertase inhibitor.